The sequence spans 319 residues: tRNA uridine(34) hydroxylase (319 aa).

In terms of domain architecture, Rhodanese spans 127-221 (KQEDTVIIDA…YGKDPEVQGE (95 aa)). Catalysis depends on cysteine 181, which acts as the Cysteine persulfide intermediate.

This sequence belongs to the TrhO family.

The enzyme catalyses uridine(34) in tRNA + AH2 + O2 = 5-hydroxyuridine(34) in tRNA + A + H2O. Functionally, catalyzes oxygen-dependent 5-hydroxyuridine (ho5U) modification at position 34 in tRNAs. The protein is tRNA uridine(34) hydroxylase of Bacillus cereus (strain B4264).